The primary structure comprises 216 residues: Small ribosomal subunit protein uS3c (216 aa).

The 76-residue stretch at 43–118 (IKNYLQKNMR…KLNIAITRIT (76 aa)) folds into the KH type-2 domain.

This sequence belongs to the universal ribosomal protein uS3 family. Part of the 30S ribosomal subunit.

Its subcellular location is the plastid. The protein localises to the chloroplast. In Eucalyptus globulus subsp. globulus (Tasmanian blue gum), this protein is Small ribosomal subunit protein uS3c (rps3).